A 361-amino-acid polypeptide reads, in one-letter code: Protein-L-isoaspartate O-methyltransferase domain-containing protein 2 (361 aa).

A lipid anchor (N-myristoyl glycine) is attached at Gly-2. The active site involves Ser-64. AdoMet binding motif regions lie at residues 85 to 94 (LNLGSGTGYL), 160 to 164 (YDRVY), and 181 to 191 (LKVGGILVMPL). Residues 240–250 (VRSLQDLARIA) form a BC-box region. Residues 303–336 (SNPSDDNSCEDLEEERREEEEKTPPETKPDPPVN) are disordered. Residues 309–320 (NSCEDLEEERRE) show a composition bias toward acidic residues. A compositionally biased stretch (basic and acidic residues) spans 321 to 331 (EEEKTPPETKP). A CUL-box region spans residues 345-348 (LPLP).

The protein belongs to the methyltransferase superfamily. L-isoaspartyl/D-aspartyl protein methyltransferase family.

Its subcellular location is the cytoplasm. Its function is as follows. May act as a substrate recognition component of an ECS (Elongin BC-CUL5-SOCS-box protein) E3 ubiquitin ligase complex which mediates the ubiquitination and subsequent proteasomal degradation of target proteins. May bind to the methyltransferase cofactor S-adenosylmethionine (AdoMet) via the N-terminal AdoMet binding motif, but probably does not display methyltransferase activity. The polypeptide is Protein-L-isoaspartate O-methyltransferase domain-containing protein 2 (PCMTD2) (Homo sapiens (Human)).